Here is an 892-residue protein sequence, read N- to C-terminus: Dipeptidyl peptidase 8 (892 aa).

Catalysis depends on charge relay system residues S749, D827, and H859.

Belongs to the peptidase S9B family. DPPIV subfamily. As to quaternary structure, homodimer. Forms a ternary complex with NLRP1, composed of a DPP8 homodimer, one full-length NLRP1 protein, and one cleaved C-terminus of NLRP1 (NACHT, LRR and PYD domains-containing protein 1, C-terminus). Forms a ternary complex with CARD8, composed of a DPP8 homodimer, one full-length NLRP1 protein, and one cleaved C-terminus of CARD8 (Caspase recruitment domain-containing protein 8, C-terminus). In the ternary complex, only one subunit of the DPP8 homodimer is bound to NLRP1 or CARD8.

It is found in the cytoplasm. It carries out the reaction Release of an N-terminal dipeptide, Xaa-Yaa-|-Zaa-, from a polypeptide, preferentially when Yaa is Pro, provided Zaa is neither Pro nor hydroxyproline.. With respect to regulation, inhibited by zinc. Inhibited by the serine proteinase inhibitor 4-(2-aminoethyl)benzenesulphonyl fluoride (AEBSF), and by di-isopropylfluorophosphate. Specifically inhibited by isoindoline derivatives. Inhibited by Val-boroPro (Talabostat, PT-100), a non-selective inhibitor, which triggers pyroptosis in monocytes and macrophages. Its function is as follows. Dipeptidyl peptidase that cleaves off N-terminal dipeptides from proteins having a Pro or Ala residue at position 2. Acts as a key inhibitor of caspase-1-dependent monocyte and macrophage pyroptosis in resting cells by preventing activation of NLRP1 and CARD8. Sequesters the cleaved C-terminal part of NLRP1 and CARD8, which respectively constitute the active part of the NLRP1 and CARD8 inflammasomes, in a ternary complex, thereby preventing their oligomerization and activation. The dipeptidyl peptidase activity is required to suppress NLRP1 and CARD8; however, neither NLRP1 nor CARD8 are bona fide substrates of DPP8, suggesting the existence of substrate(s) required for NLRP1 and CARD8 inhibition. In Mus musculus (Mouse), this protein is Dipeptidyl peptidase 8.